We begin with the raw amino-acid sequence, 211 residues long: Pyruvate dehydrogenase E1 component subunit beta, mitochondrial (211 aa).

Position 31 is a phosphotyrosine (Y31). K(+)-binding residues include I48, A96, I97, D99, and N101.

In terms of assembly, heterotetramer of two PDHA1 and two PDHB subunits. The heterotetramer interacts with DLAT, and is part of the multimeric pyruvate dehydrogenase complex that contains multiple copies of pyruvate dehydrogenase (E1), dihydrolipoamide acetyltransferase (DLAT, E2) and lipoamide dehydrogenase (DLD, E3). These subunits are bound to an inner core composed of about 48 DLAT and 12 PDHX molecules. Interacts with DLAT. It depends on thiamine diphosphate as a cofactor.

It localises to the mitochondrion matrix. The catalysed reaction is N(6)-[(R)-lipoyl]-L-lysyl-[protein] + pyruvate + H(+) = N(6)-[(R)-S(8)-acetyldihydrolipoyl]-L-lysyl-[protein] + CO2. In terms of biological role, the pyruvate dehydrogenase complex catalyzes the overall conversion of pyruvate to acetyl-CoA and CO(2), and thereby links the glycolytic pathway to the tricarboxylic cycle. The chain is Pyruvate dehydrogenase E1 component subunit beta, mitochondrial from Mesocricetus auratus (Golden hamster).